The sequence spans 537 residues: 2-succinyl-5-enolpyruvyl-6-hydroxy-3-cyclohexene-1-carboxylate synthase (537 aa).

It belongs to the TPP enzyme family. MenD subfamily. Homodimer. The cofactor is Mg(2+). Mn(2+) is required as a cofactor. It depends on thiamine diphosphate as a cofactor.

The enzyme catalyses isochorismate + 2-oxoglutarate + H(+) = 5-enolpyruvoyl-6-hydroxy-2-succinyl-cyclohex-3-ene-1-carboxylate + CO2. It participates in quinol/quinone metabolism; 1,4-dihydroxy-2-naphthoate biosynthesis; 1,4-dihydroxy-2-naphthoate from chorismate: step 2/7. It functions in the pathway quinol/quinone metabolism; menaquinone biosynthesis. Its function is as follows. Catalyzes the thiamine diphosphate-dependent decarboxylation of 2-oxoglutarate and the subsequent addition of the resulting succinic semialdehyde-thiamine pyrophosphate anion to isochorismate to yield 2-succinyl-5-enolpyruvyl-6-hydroxy-3-cyclohexene-1-carboxylate (SEPHCHC). This Dechloromonas aromatica (strain RCB) protein is 2-succinyl-5-enolpyruvyl-6-hydroxy-3-cyclohexene-1-carboxylate synthase.